The primary structure comprises 170 residues: Ribosome maturation factor RimM (170 aa).

Residues 98–170 (PDEYYWVDLE…RIVVDWDPEF (73 aa)) form the PRC barrel domain.

The protein belongs to the RimM family. In terms of assembly, binds ribosomal protein uS19.

The protein resides in the cytoplasm. In terms of biological role, an accessory protein needed during the final step in the assembly of 30S ribosomal subunit, possibly for assembly of the head region. Essential for efficient processing of 16S rRNA. May be needed both before and after RbfA during the maturation of 16S rRNA. It has affinity for free ribosomal 30S subunits but not for 70S ribosomes. The protein is Ribosome maturation factor RimM of Xylella fastidiosa (strain 9a5c).